The chain runs to 384 residues: Glucose-fructose oxidoreductase domain-containing protein 2 (384 aa).

The first 25 residues, 1-25, serve as a signal peptide directing secretion; that stretch reads MKTLPGIGVFGTGNTARVLISLLRA. Residues 358-384 form a disordered region; it reads GEWESVELTNDETDSNQNLSEVIQHNL. The span at 372-384 shows a compositional bias: polar residues; that stretch reads SNQNLSEVIQHNL.

Belongs to the Gfo/Idh/MocA family.

The protein resides in the secreted. The protein localises to the extracellular space. It is found in the extracellular matrix. Its function is as follows. Promotes matrix assembly. This chain is Glucose-fructose oxidoreductase domain-containing protein 2 (gfod2), found in Xenopus tropicalis (Western clawed frog).